We begin with the raw amino-acid sequence, 537 residues long: MTKFIFVTGGVVSGLGKGITSASIGLLMKARGYKTTNIKIDPYINYDAGTMNPYQHGEVFVLDDGGEVDLDLGNYERFLDTNLTFEHNITTGKVYSTVIEKERRGEYLGATVQVIPHITDEIKRRIREIAKDYDIVVVEIGGTVGDIESMPFLEAARQMQLEEGRENVAFVHVTYVPKLKVVGEQKTKPTQHSVKELRSLGIQPDAIVARSEDPLEEEARKKISLFTNVPREAVVSAYDVEDTYEVPLLLEREGLGKYLIKRLKLEDREPDLREWEKMVAKYKALKETVEIAIVGKYVKLTDSYLSIKEALKHASVSNDVKVKIRWIEAEDIEEHGTKLLEGVDGIIVPGGFGARGAEGKIMTIKYARENDIPFLGICFGFQLTVVEFARNVLGMKGAHSTEIDPQTPYPVVDLMPEQRNLEKLGGTMRLGAYPVKIKKGTLAYRLYKKELVYERHRHRWEVNPDYIEAFEKAGLVFSGVAGDDERRMEILELPDKRYFIATQFHPEFKSRPMRPAPVFHGLVRAAKEYKQEKNATN.

The interval 1–265 (MTKFIFVTGG…GKYLIKRLKL (265 aa)) is amidoligase domain. Serine 13 contacts CTP. Serine 13 contacts UTP. 14–19 (GLGKGI) serves as a coordination point for ATP. Position 54 (tyrosine 54) interacts with L-glutamine. Aspartate 71 is an ATP binding site. Residues aspartate 71 and glutamate 139 each coordinate Mg(2+). CTP is bound by residues 146-148 (DIE), 186-191 (KTKPTQ), and lysine 222. Residues 186–191 (KTKPTQ) and lysine 222 contribute to the UTP site. Positions 290–532 (EIAIVGKYVK…VRAAKEYKQE (243 aa)) constitute a Glutamine amidotransferase type-1 domain. Residue glycine 351 coordinates L-glutamine. Cysteine 378 (nucleophile; for glutamine hydrolysis) is an active-site residue. L-glutamine-binding positions include 379 to 382 (FGFQ), glutamate 402, and arginine 459. Catalysis depends on residues histidine 505 and glutamate 507.

Belongs to the CTP synthase family. As to quaternary structure, homotetramer.

The catalysed reaction is UTP + L-glutamine + ATP + H2O = CTP + L-glutamate + ADP + phosphate + 2 H(+). It catalyses the reaction L-glutamine + H2O = L-glutamate + NH4(+). It carries out the reaction UTP + NH4(+) + ATP = CTP + ADP + phosphate + 2 H(+). It participates in pyrimidine metabolism; CTP biosynthesis via de novo pathway; CTP from UDP: step 2/2. With respect to regulation, allosterically activated by GTP, when glutamine is the substrate; GTP has no effect on the reaction when ammonia is the substrate. The allosteric effector GTP functions by stabilizing the protein conformation that binds the tetrahedral intermediate(s) formed during glutamine hydrolysis. Inhibited by the product CTP, via allosteric rather than competitive inhibition. In terms of biological role, catalyzes the ATP-dependent amination of UTP to CTP with either L-glutamine or ammonia as the source of nitrogen. Regulates intracellular CTP levels through interactions with the four ribonucleotide triphosphates. This Pyrococcus horikoshii (strain ATCC 700860 / DSM 12428 / JCM 9974 / NBRC 100139 / OT-3) protein is CTP synthase.